The sequence spans 305 residues: GMP synthase [glutamine-hydrolyzing] subunit B (305 aa).

Positions 2-184 (VNTERFIQQA…LGLPREIQHR (183 aa)) constitute a GMPS ATP-PPase domain. 29–35 (SGGVDSS) serves as a coordination point for ATP.

As to quaternary structure, heterodimer composed of a glutamine amidotransferase subunit (A) and a GMP-binding subunit (B).

It catalyses the reaction XMP + L-glutamine + ATP + H2O = GMP + L-glutamate + AMP + diphosphate + 2 H(+). Its pathway is purine metabolism; GMP biosynthesis; GMP from XMP (L-Gln route): step 1/1. Catalyzes the synthesis of GMP from XMP. This Methanosphaerula palustris (strain ATCC BAA-1556 / DSM 19958 / E1-9c) protein is GMP synthase [glutamine-hydrolyzing] subunit B.